The chain runs to 141 residues: MRHGKAGRKLNRTASHRKAMFANMAASLIEHEQIVTTLPKAKEIRPIVEKLVTLGKRGDLHARRQAISQIRDVAVVSKLFDAIASRYATRNGGYLRIMKAGFRQGDNAPLAVIEFVDRDVDAKGAKDRARVAAEAEAAEAA.

It belongs to the bacterial ribosomal protein bL17 family. In terms of assembly, part of the 50S ribosomal subunit. Contacts protein L32.

The protein is Large ribosomal subunit protein bL17 of Sinorhizobium fredii (strain NBRC 101917 / NGR234).